Consider the following 946-residue polypeptide: MKPLSSPLQQYWQTVVERLPEPLAEKSLSAQAKSVLTFSDFVQDSVIAHPEWLTELESQSPQADEWQHYAAWLQEALSNVSDEAGLMRELRLFRRRIMVRIAWAQTLALVTEESILQQLSHLAETLIVAARDWLYDACCREWGTPCNAQGEAQPLLILGMGKLGGGELNFSSDIDLIFAWPEHGCTQGGRRELDNAQFFTRMGQRLIKVLDQPTQDGFVYRVDMRLRPFGESGPLVLSFAALEDYYQEQGRDWERYAMVKARIMGDSEGVYANELRAMLRPFVFRRYIDFSVIQSLRNMKGMIAREVRRRGLTDNIKLGAGGIREIEFIVQVFQLIRGGREPSLQSRSLLPTLSVIAALHLLSENDAEQLRVAYLFLRRLENLLQSINDEQTQTLPSDELNRARLAWAMDFADWPQLTGALTAHMTNVRRVFNELIGDDESETQEESLSEQWRELWQDALQEDDTTPVLAHLSEDDRKQVLTLIADFRKELDKRTIGPRGRQVLDHLMPHLLSDVCAREDAAVTLSRITALLVGIVTRTTYLELLSEFPAALKHLISLCAASPMIASQLARYPLLLDELLDPNTLYQPTATDAYRDELRQYLLRVPEDDEEQQLEALRQFKQAQLLRIAAADIAGTLPVMKVSDHLTWLAEAMIDAVVQQAWVQMVARYGKPNHLNDREGRGFAVVGYGKLGGWELGYSSDLDLIFLHDCPMDAMTDGEREIDGRQFYLRLAQRIMHLFSTRTSSGILYEVDARLRPSGAAGMLVTSAEAFADYQKNEAWTWEHQALVRARVVYGDPQLTAHFDAVRREIMTLPREGKTLQTEVREMREKMRAHLGNKHRDRFDIKADEGGITDIEFITQYLVLRYAHEKPKLTRWSDNVRILELLAQNDIMEEQEAMALTRAYTTLRDELHHLALQELPGHVPEDCFTAERELVRASWQKWLVEE.

Residues 1 to 440 (MKPLSSPLQQ…VFNELIGDDE (440 aa)) are adenylyl removase. An adenylyl transferase region spans residues 449-946 (SEQWRELWQD…ASWQKWLVEE (498 aa)).

It belongs to the GlnE family. Requires Mg(2+) as cofactor.

It carries out the reaction [glutamine synthetase]-O(4)-(5'-adenylyl)-L-tyrosine + phosphate = [glutamine synthetase]-L-tyrosine + ADP. The enzyme catalyses [glutamine synthetase]-L-tyrosine + ATP = [glutamine synthetase]-O(4)-(5'-adenylyl)-L-tyrosine + diphosphate. Its function is as follows. Involved in the regulation of glutamine synthetase GlnA, a key enzyme in the process to assimilate ammonia. When cellular nitrogen levels are high, the C-terminal adenylyl transferase (AT) inactivates GlnA by covalent transfer of an adenylyl group from ATP to specific tyrosine residue of GlnA, thus reducing its activity. Conversely, when nitrogen levels are low, the N-terminal adenylyl removase (AR) activates GlnA by removing the adenylyl group by phosphorolysis, increasing its activity. The regulatory region of GlnE binds the signal transduction protein PII (GlnB) which indicates the nitrogen status of the cell. This is Bifunctional glutamine synthetase adenylyltransferase/adenylyl-removing enzyme from Escherichia coli (strain SE11).